The chain runs to 199 residues: Shikimate kinase (199 aa).

14-19 (GSGKST) is an ATP binding site. Serine 18 contacts Mg(2+). Residues aspartate 36, arginine 60, and glycine 82 each contribute to the substrate site. Position 120 (arginine 120) interacts with ATP. Arginine 147 is a binding site for substrate. Positions 179 to 199 (YVRRAEKNQNSHSQTKKQSRK) are disordered.

Belongs to the shikimate kinase family. Monomer. Mg(2+) is required as a cofactor.

It is found in the cytoplasm. The enzyme catalyses shikimate + ATP = 3-phosphoshikimate + ADP + H(+). Its pathway is metabolic intermediate biosynthesis; chorismate biosynthesis; chorismate from D-erythrose 4-phosphate and phosphoenolpyruvate: step 5/7. Functionally, catalyzes the specific phosphorylation of the 3-hydroxyl group of shikimic acid using ATP as a cosubstrate. The polypeptide is Shikimate kinase (Chlorobium phaeobacteroides (strain BS1)).